Consider the following 381-residue polypeptide: uncharacterized protein (381 aa).

The next 9 helical transmembrane spans lie at 59–79 (LITLFGFISIIVSYFVTLYYM), 84–104 (GVAPKWLYLFNALCIFIYQTM), 147–167 (VGVNQISFFTTLWIMYVFFMA), 190–210 (SMMAGHIFTFFYGEQFWFNTI), 222–242 (LVLLVVILGGVGTILLNTFSI), 250–270 (ILTNIINLVPISILLGVSIYW), 284–304 (HYFMGIFGILFALVTGKLILA), 311–331 (LSPIQLIMLPLIAVILNIYKF), and 344–364 (VYFFVVFIVYIHFAYDVVTSL).

Belongs to the CDP-alcohol phosphatidyltransferase class-I family.

Its subcellular location is the membrane. This is an uncharacterized protein from Dictyostelium discoideum (Social amoeba).